Reading from the N-terminus, the 292-residue chain is Probable alpha-L-glutamate ligase (292 aa).

Positions 104-287 constitute an ATP-grasp domain; that stretch reads HQLLAAKGID…VATRIIEHVE (184 aa). Residues K141, 178-179, D187, and 211-213 each bind ATP; these read EF and RSN. 3 residues coordinate Mg(2+): D248, E260, and N262. 3 residues coordinate Mn(2+): D248, E260, and N262.

The protein belongs to the RimK family. Requires Mg(2+) as cofactor. The cofactor is Mn(2+).

This Stenotrophomonas maltophilia (strain R551-3) protein is Probable alpha-L-glutamate ligase.